Here is a 1637-residue protein sequence, read N- to C-terminus: Stress response protein NST1 (1637 aa).

A compositionally biased stretch (polar residues) spans 1–17; the sequence is MSNRGNLNLNLPPSSGK. Disordered stretches follow at residues 1–155, 221–252, 442–494, 504–523, 681–734, 746–825, 871–1036, 1049–1075, 1176–1299, and 1512–1534; these read MSNR…EITN, HQASNNNHIHNHSHTSSHPLQHTPNHLHHASH, LKMN…SQQL, KNNLQQNHHTHHHHQQPLQH, KTPY…EIDD, QHHH…EEEK, AKRE…SKHV, SKQNQAQNGNQSHLPPQSRLRQDEENP, NSSQ…GAII, and YTQQQQQQQQPQPQPQSQQQYPL. Over residues 24–33 the composition is skewed to basic and acidic residues; it reads VHFELSKEKN. Low complexity-rich tracts occupy residues 34–53 and 64–113; these read NSTNSNPHTSSTSTSNSNNT and NDNN…QQQS. The span at 124–134 shows a compositional bias: basic residues; sequence AKKRKKKKSKK. Residues 135-155 are compositionally biased toward low complexity; it reads SSNNNGNNSNTNSNSNSEITN. Positions 446-470 are enriched in low complexity; that stretch reads QRQQSQSQSQSQSQQQRDVQTAQSQ. Positions 471 to 487 are enriched in polar residues; that stretch reads VLSKDSSLKNANTSMNK. A compositionally biased stretch (polar residues) spans 692 to 706; sequence PAATSQDREQQVQPN. Positions 717 to 734 are enriched in basic and acidic residues; sequence DHEHEHEHEHEHEHEIDD. Over residues 754–808 the composition is skewed to acidic residues; it reads EEYDEEDEEDDEEYEYGDDEEEEDEEDEEEGEDEELEEVVEDDVDEEILDDEEEF. Residues 855–1023 adopt a coiled-coil conformation; sequence KDNTRKLFEE…KQLEKEAAVS (169 aa). 2 stretches are compositionally biased toward basic and acidic residues: residues 871–887 and 896–1021; these read AKREKEAKKLKQKEKAK and AKEE…KEAA. Polar residues predominate over residues 1049 to 1063; that stretch reads SKQNQAQNGNQSHLP. The segment covering 1176 to 1199 has biased composition (low complexity); sequence NSSQGSPWTTNSTLSSNLGSTGLS. The segment covering 1201 to 1228 has biased composition (polar residues); that stretch reads GQGQTVSGVNTNLPSSIGITSGGASQIF. Over residues 1234-1257 the composition is skewed to low complexity; the sequence is PQLQPHQPQQQQQQQQQQQQQQQQ. The segment covering 1258–1267 has biased composition (polar residues); it reads NYFSPFNSFS. Low complexity-rich tracts occupy residues 1282-1299 and 1514-1534; these read TTNINNSTTASSSTGAII and QQQQQQQQPQPQPQSQQQYPL.

The protein belongs to the NST1 family.

It is found in the cytoplasm. Functionally, may act as a negative regulator of salt tolerance. The polypeptide is Stress response protein NST1 (NST1) (Lodderomyces elongisporus (strain ATCC 11503 / CBS 2605 / JCM 1781 / NBRC 1676 / NRRL YB-4239) (Yeast)).